Here is a 142-residue protein sequence, read N- to C-terminus: Large ribosomal subunit protein uL11 (142 aa).

The protein belongs to the universal ribosomal protein uL11 family. Part of the ribosomal stalk of the 50S ribosomal subunit. Interacts with L10 and the large rRNA to form the base of the stalk. L10 forms an elongated spine to which L12 dimers bind in a sequential fashion forming a multimeric L10(L12)X complex. Post-translationally, one or more lysine residues are methylated.

Forms part of the ribosomal stalk which helps the ribosome interact with GTP-bound translation factors. The protein is Large ribosomal subunit protein uL11 of Citrobacter koseri (strain ATCC BAA-895 / CDC 4225-83 / SGSC4696).